The sequence spans 235 residues: (5-formylfuran-3-yl)methyl phosphate synthase (235 aa).

The Schiff-base intermediate with substrate role is filled by Lys27. Catalysis depends on Lys86, which acts as the Proton acceptor.

This sequence belongs to the MfnB family.

The catalysed reaction is 2 D-glyceraldehyde 3-phosphate = 4-(hydroxymethyl)-2-furancarboxaldehyde phosphate + phosphate + 2 H2O. Its pathway is cofactor biosynthesis; methanofuran biosynthesis. Its function is as follows. Catalyzes the formation of 4-(hydroxymethyl)-2-furancarboxaldehyde phosphate (4-HFC-P) from two molecules of glyceraldehyde-3-P (GA-3-P). This is (5-formylfuran-3-yl)methyl phosphate synthase from Archaeoglobus fulgidus (strain ATCC 49558 / DSM 4304 / JCM 9628 / NBRC 100126 / VC-16).